Reading from the N-terminus, the 115-residue chain is DNA-binding protein APE_1087b (115 aa).

The protein belongs to the PDCD5 family.

The sequence is that of DNA-binding protein APE_1087b from Aeropyrum pernix (strain ATCC 700893 / DSM 11879 / JCM 9820 / NBRC 100138 / K1).